The primary structure comprises 140 residues: ATP synthase epsilon chain (140 aa).

This sequence belongs to the ATPase epsilon chain family. F-type ATPases have 2 components, CF(1) - the catalytic core - and CF(0) - the membrane proton channel. CF(1) has five subunits: alpha(3), beta(3), gamma(1), delta(1), epsilon(1). CF(0) has three main subunits: a, b and c.

The protein localises to the cell inner membrane. Produces ATP from ADP in the presence of a proton gradient across the membrane. The polypeptide is ATP synthase epsilon chain (Xanthomonas oryzae pv. oryzae (strain MAFF 311018)).